A 261-amino-acid polypeptide reads, in one-letter code: MANQESTTRTLLVALVVCLVSSVFVAGAAVALKPTQAENRLLDKQRSILAIAGLGEPGMSGKEVKALFDSRITAKVVDLQSGTFSDAQDPLGYDPLKAAKDPALSDALPAAEDIASIKRRERYTTVYLVETDGKLDTLILPVRGYGLWSTLYGFLALKGDLNTVAGFGFYQHGETPGLGGEVDNPKWKALWVGKTLYDAQGDLAVQIIKGSVDPQSAKATHQVDGLAGATLTSKGVDNLLHFWLGKDGFDAFLANLRKGEA.

Residues 11–31 (LLVALVVCLVSSVFVAGAAVA) form a helical membrane-spanning segment. T230 carries the post-translational modification FMN phosphoryl threonine.

Belongs to the NqrC family. As to quaternary structure, composed of six subunits; NqrA, NqrB, NqrC, NqrD, NqrE and NqrF. FMN serves as cofactor.

The protein resides in the cell inner membrane. The catalysed reaction is a ubiquinone + n Na(+)(in) + NADH + H(+) = a ubiquinol + n Na(+)(out) + NAD(+). Functionally, NQR complex catalyzes the reduction of ubiquinone-1 to ubiquinol by two successive reactions, coupled with the transport of Na(+) ions from the cytoplasm to the periplasm. NqrA to NqrE are probably involved in the second step, the conversion of ubisemiquinone to ubiquinol. This chain is Na(+)-translocating NADH-quinone reductase subunit C, found in Pseudomonas aeruginosa (strain ATCC 15692 / DSM 22644 / CIP 104116 / JCM 14847 / LMG 12228 / 1C / PRS 101 / PAO1).